The sequence spans 185 residues: Ribosome-recycling factor (185 aa).

The protein belongs to the RRF family.

Its subcellular location is the cytoplasm. Its function is as follows. Responsible for the release of ribosomes from messenger RNA at the termination of protein biosynthesis. May increase the efficiency of translation by recycling ribosomes from one round of translation to another. In Idiomarina loihiensis (strain ATCC BAA-735 / DSM 15497 / L2-TR), this protein is Ribosome-recycling factor.